Reading from the N-terminus, the 438-residue chain is Minor myo-inositol transporter IolF (438 aa).

12 helical membrane-spanning segments follow: residues 15-35 (IAAA…SAGL), 49-69 (IGLL…ALLG), 86-106 (MLVY…PMLL), 108-128 (GYII…TIIA), 147-167 (WAAG…LGLL), 171-191 (IVFA…IRLP), 230-250 (ILFL…MGFF), 268-288 (LLQM…FMPF), 295-312 (TVFG…TLFL), 317-334 (GLPI…NNGA), 359-379 (LMFF…PMII), and 387-407 (MAAI…LFAP).

It belongs to the major facilitator superfamily. Sugar transporter (TC 2.A.1.1) family.

Its subcellular location is the cell membrane. The protein operates within polyol metabolism; myo-inositol degradation into acetyl-CoA. In terms of biological role, minor myo-inositol uptake transporter. This is Minor myo-inositol transporter IolF (iolF) from Bacillus subtilis (strain 168).